A 496-amino-acid polypeptide reads, in one-letter code: D-2-hydroxyglutarate--pyruvate transhydrogenase DLD3 (496 aa).

A Glycyl lysine isopeptide (Lys-Gly) (interchain with G-Cter in ubiquitin) cross-link involves residue K17. The 180-residue stretch at 64–243 (YRGQSNLILL…TGVSIVAAAK (180 aa)) folds into the FAD-binding PCMH-type domain.

This sequence belongs to the FAD-binding oxidoreductase/transferase type 4 family. It depends on FAD as a cofactor.

Its subcellular location is the cytoplasm. It catalyses the reaction (R)-lactate + 2 Fe(III)-[cytochrome c] = 2 Fe(II)-[cytochrome c] + pyruvate + 2 H(+). The enzyme catalyses (R)-2-hydroxyglutarate + pyruvate = (R)-lactate + 2-oxoglutarate. Its function is as follows. Catalyzes the reversible oxidation of (R)-2-hydroxyglutarate to 2-oxoglutarate coupled to reduction of pyruvate to (R)-lactate. Can also use oxaloacetate as electron acceptor instead of pyruvate producing (R)-malate. The protein is D-2-hydroxyglutarate--pyruvate transhydrogenase DLD3 (DLD3) of Saccharomyces cerevisiae (strain ATCC 204508 / S288c) (Baker's yeast).